Here is a 300-residue protein sequence, read N- to C-terminus: 7-methylguanosine phosphate-specific 5'-nucleotidase (300 aa).

Residue Asp-41 is the Nucleophile of the active site. Asp-41 and Asp-43 together coordinate Mg(2+). Residue Asp-43 is the Proton donor of the active site. Glu-88 is a binding site for CMP. Residue Glu-88 participates in N(7)-methyl-GMP binding. Residues Ser-156–Ala-157 and Lys-205 each bind substrate. Asp-230 serves as a coordination point for Mg(2+). Lys-256 carries the N6-acetyllysine modification.

It belongs to the pyrimidine 5'-nucleotidase family. Monomer.

The protein localises to the cytoplasm. The enzyme catalyses N(7)-methyl-GMP + H2O = N(7)-methylguanosine + phosphate. It carries out the reaction CMP + H2O = cytidine + phosphate. The catalysed reaction is a ribonucleoside 5'-phosphate + H2O = a ribonucleoside + phosphate. Its function is as follows. Specifically hydrolyzes 7-methylguanosine monophosphate (m(7)GMP) to 7-methylguanosine and inorganic phosphate. The specific activity for m(7)GMP may protect cells against undesired salvage of m(7)GMP and its incorporation into nucleic acids. Also has weak activity for CMP. UMP and purine nucleotides are poor substrates. This chain is 7-methylguanosine phosphate-specific 5'-nucleotidase (Nt5c3b), found in Rattus norvegicus (Rat).